We begin with the raw amino-acid sequence, 208 residues long: Ubiquitin-conjugating enzyme E2 S (208 aa).

The UBC core domain occupies 14 to 160 (QTIRQVMREL…ARMMTEIHAQ (147 aa)). The active-site Glycyl thioester intermediate is the Cys98. The interval 159 to 208 (AQPAKCASTTSDAKDDDGPSTKKHAGLDKKLQDKKKEKLLKEKKRMLKRL) is disordered. The span at 170–198 (DAKDDDGPSTKKHAGLDKKLQDKKKEKLL) shows a compositional bias: basic and acidic residues. A compositionally biased stretch (basic residues) spans 199-208 (KEKKRMLKRL).

The protein belongs to the ubiquitin-conjugating enzyme family.

The catalysed reaction is S-ubiquitinyl-[E1 ubiquitin-activating enzyme]-L-cysteine + [E2 ubiquitin-conjugating enzyme]-L-cysteine = [E1 ubiquitin-activating enzyme]-L-cysteine + S-ubiquitinyl-[E2 ubiquitin-conjugating enzyme]-L-cysteine.. It participates in protein modification; protein ubiquitination. In terms of biological role, catalyzes the covalent attachment of ubiquitin to other proteins. Acts as an essential factor of the anaphase promoting complex/cyclosome (APC/C), a cell cycle-regulated ubiquitin ligase that controls progression through mitosis. Acts by specifically elongating polyubiquitin chains initiated by the E2 enzyme vih/UbcH10 on APC/C substrates, enhancing the degradation of APC/C substrates by the proteasome and promoting mitotic exit. The protein is Ubiquitin-conjugating enzyme E2 S of Drosophila willistoni (Fruit fly).